A 158-amino-acid chain; its full sequence is Pyruvoyl-dependent arginine decarboxylase (158 aa).

S44 carries the post-translational modification Pyruvic acid (Ser).

The protein belongs to the PdaD family. Requires pyruvate as cofactor.

The catalysed reaction is L-arginine + H(+) = agmatine + CO2. The chain is Pyruvoyl-dependent arginine decarboxylase from Pyrococcus furiosus (strain ATCC 43587 / DSM 3638 / JCM 8422 / Vc1).